The chain runs to 454 residues: Transmembrane protein adipocyte-associated 1 homolog (454 aa).

N-linked (GlcNAc...) asparagine glycans are attached at residues Asn26 and Asn44. 5 consecutive transmembrane segments (helical) span residues 80-100, 113-133, 151-171, 180-200, and 224-244; these read AILI…TSVI, AFTL…VYSM, IIIK…GLLF, ILIA…VQVI, and FVFW…IMCL. N-linked (GlcNAc...) asparagine glycosylation is present at Asn258. Helical transmembrane passes span 262 to 282 and 290 to 310; these read FIYC…AALI and LCFV…IIYF. Residues Asn322 and Asn323 are each glycosylated (N-linked (GlcNAc...) asparagine). Positions 408-454 are disordered; it reads RTGSDDFAHHRDSMLSEPSTGTTTRHLKGLGPQGSLVFEEDPSSLRL. Basic and acidic residues predominate over residues 410-421; sequence GSDDFAHHRDSM. Acidic residues predominate over residues 445–454; the sequence is FEEDPSSLRL.

It belongs to the UPF0359 family.

The protein resides in the membrane. This is Transmembrane protein adipocyte-associated 1 homolog (tpra-1) from Caenorhabditis briggsae.